The sequence spans 232 residues: uncharacterized protein (232 aa).

2 disordered regions span residues 123–147 and 169–200; these read VAGG…RKYP and AAAD…PSLR.

The protein belongs to the mycobacterial PPE family.

This is an uncharacterized protein from Mycobacterium tuberculosis (strain ATCC 25618 / H37Rv).